Here is a 132-residue protein sequence, read N- to C-terminus: Transcription antitermination protein NusB (132 aa).

Belongs to the NusB family.

Its function is as follows. Involved in transcription antitermination. Required for transcription of ribosomal RNA (rRNA) genes. Binds specifically to the boxA antiterminator sequence of the ribosomal RNA (rrn) operons. The polypeptide is Transcription antitermination protein NusB (Campylobacter jejuni subsp. doylei (strain ATCC BAA-1458 / RM4099 / 269.97)).